A 99-amino-acid polypeptide reads, in one-letter code: Large ribosomal subunit protein bL28 (99 aa).

The protein belongs to the bacterial ribosomal protein bL28 family.

The sequence is that of Large ribosomal subunit protein bL28 from Rhizobium leguminosarum bv. trifolii (strain WSM2304).